The chain runs to 519 residues: Exodeoxyribonuclease 7 large subunit (519 aa).

The segment at Val-500–Leu-519 is disordered.

The protein belongs to the XseA family. As to quaternary structure, heterooligomer composed of large and small subunits.

It is found in the cytoplasm. The enzyme catalyses Exonucleolytic cleavage in either 5'- to 3'- or 3'- to 5'-direction to yield nucleoside 5'-phosphates.. Bidirectionally degrades single-stranded DNA into large acid-insoluble oligonucleotides, which are then degraded further into small acid-soluble oligonucleotides. The polypeptide is Exodeoxyribonuclease 7 large subunit (Cereibacter sphaeroides (strain ATCC 17029 / ATH 2.4.9) (Rhodobacter sphaeroides)).